The following is a 564-amino-acid chain: Hexose transporter HXT13 (564 aa).

Residues 1–52 lie on the Cytoplasmic side of the membrane; the sequence is MSSAQSSIDSDGDVRDADIHVAPPVEKEWSDGFDDNEVINGDNVEPPKRGLI. Residues 53–73 form a helical membrane-spanning segment; it reads GYLVIYLLCYPISFGGFLPGW. The Extracellular segment spans residues 74–109; the sequence is DSGITAGFINMDNFKMNFGSYKHSTGEYYLSNVRMG. Residues 110-130 traverse the membrane as a helical segment; that stretch reads LLVAMFSIGCAIGGLIFARLA. The Cytoplasmic portion of the chain corresponds to 131–136; that stretch reads DTLGRR. The chain crosses the membrane as a helical span at residues 137-157; sequence LAIVIVVLVYMVGAIIQISSN. Topologically, residues 158-167 are extracellular; sequence HKWYQYFVGK. Residues 168–188 traverse the membrane as a helical segment; it reads IIYGLGAGGCSVLCPMLLSEI. Residues 189–194 are Cytoplasmic-facing; it reads APTDLR. Residues 195 to 215 traverse the membrane as a helical segment; the sequence is GGLVSLYQLNMTFGIFLGYCS. The Extracellular portion of the chain corresponds to 216-229; it reads VYGTRKYDNTAQWR. A helical membrane pass occupies residues 230 to 250; the sequence is VPLGLCFLWALIIIIGMLLVP. The Cytoplasmic segment spans residues 251-333; that stretch reads ESPRYLIECE…VQTFLQLTGE (83 aa). The helical transmembrane segment at 334-350 threads the bilayer; the sequence is NYFFFYGTTIFKSVGLT. Over 351 to 356 the chain is Extracellular; the sequence is DGFETS. The chain crosses the membrane as a helical span at residues 357 to 374; sequence IVLGTVNFFSTIIAVMVV. The Cytoplasmic portion of the chain corresponds to 375-381; sequence DKIGRRK. A helical transmembrane segment spans residues 382–402; the sequence is CLLFGAAGMMACMVIFASIGV. Over 403–424 the chain is Extracellular; it reads KCLYPHGQDGPSSKGAGNAMIV. A helical membrane pass occupies residues 425–445; it reads FTCFYIFCFATTWAPVAYIVV. The Cytoplasmic portion of the chain corresponds to 446–462; sequence AESFPSKVKSRAMSIST. A helical transmembrane segment spans residues 463 to 483; it reads ACNWLWQFLIGFFTPFITGSI. H484 is a topological domain (extracellular). Residues 485–505 form a helical membrane-spanning segment; that stretch reads FYYGYVFVGCLVAMFLYVFFF. Topologically, residues 506-564 are cytoplasmic; sequence LPETIGLSLEEIQLLYEEGIKPWKSASWVPPSRRGISSEESKTEKKDWKKFLKFSKNSD. A disordered region spans residues 530–551; the sequence is SASWVPPSRRGISSEESKTEKK. The segment covering 541-551 has biased composition (basic and acidic residues); the sequence is ISSEESKTEKK.

The protein belongs to the major facilitator superfamily. Sugar transporter (TC 2.A.1.1) family.

It localises to the membrane. Probable glucose transporter. The polypeptide is Hexose transporter HXT13 (HXT13) (Saccharomyces cerevisiae (strain ATCC 204508 / S288c) (Baker's yeast)).